We begin with the raw amino-acid sequence, 448 residues long: uncharacterized protein (448 aa).

Residues 187 to 198 (SKGDRGDADDRG) show a composition bias toward basic and acidic residues. Disordered stretches follow at residues 187–221 (SKGD…LPTR), 243–270 (LQVP…GATM), and 291–361 (LSGL…LPNG). Residues 243–261 (LQVPGGTSAAIPSASSTPS) show a composition bias toward low complexity. The segment covering 307–334 (FDERGQEVRDPADYEHANEPDERRADDR) has biased composition (basic and acidic residues).

The protein to M.tuberculosis Rv0025 and Rv0739.

This is an uncharacterized protein from Mycobacterium tuberculosis (strain CDC 1551 / Oshkosh).